The primary structure comprises 258 residues: uncharacterized protein (258 aa).

Positions 1–20 (MKCFQKLYIFILILIVLMAG) are cleaved as a signal peptide. A lipid anchor (N-palmitoyl cysteine) is attached at cysteine 21. Cysteine 21 is lipidated: S-diacylglycerol cysteine.

This sequence belongs to the staphylococcal tandem lipoprotein family.

Its subcellular location is the cell membrane. This is an uncharacterized protein from Staphylococcus aureus (strain bovine RF122 / ET3-1).